The chain runs to 235 residues: Uridylate kinase (235 aa).

ATP is bound at residue 8 to 11; it reads KFSG. The segment at 16-21 is involved in allosteric activation by GTP; sequence GAEGYG. Gly-50 contacts UMP. Residues Gly-51 and Arg-55 each coordinate ATP. UMP is bound by residues Asp-71 and 132 to 139; that span reads TGNPYFTT. ATP is bound by residues Thr-159, Tyr-165, and Asp-168.

Belongs to the UMP kinase family. In terms of assembly, homohexamer.

The protein resides in the cytoplasm. The enzyme catalyses UMP + ATP = UDP + ADP. Its pathway is pyrimidine metabolism; CTP biosynthesis via de novo pathway; UDP from UMP (UMPK route): step 1/1. Its activity is regulated as follows. Allosterically activated by GTP. Inhibited by UTP. In terms of biological role, catalyzes the reversible phosphorylation of UMP to UDP. The protein is Uridylate kinase of Aliarcobacter butzleri (strain RM4018) (Arcobacter butzleri).